The primary structure comprises 226 residues: Aspartyl protease inhibitor (226 aa).

The N-terminal stretch at 1 to 15 (MKLLFLCALIALTAA) is a signal peptide. 2 disordered regions span residues 95–116 (GKKGKAVETSSEELPKAPKKPS) and 196–218 (EAKQTTTTEAPELPEEAPEQPNV). C131 and C222 are oxidised to a cystine.

The protein belongs to the protease inhibitor I33 family.

The protein localises to the secreted. Its function is as follows. Aspartyl protease inhibitor. In Parelaphostrongylus tenuis (Meningeal worm), this protein is Aspartyl protease inhibitor.